The following is a 133-amino-acid chain: Small ribosomal subunit protein uS9 (133 aa).

Positions 95 to 113 are enriched in basic and acidic residues; that stretch reads GDSKQELKSRGFLTRDPRK. Residues 95 to 133 are disordered; that stretch reads GDSKQELKSRGFLTRDPRKKERKKYGHKKARKSFQFSKR. A compositionally biased stretch (basic residues) spans 114 to 133; it reads KERKKYGHKKARKSFQFSKR.

The protein belongs to the universal ribosomal protein uS9 family.

This is Small ribosomal subunit protein uS9 from Chlamydia felis (strain Fe/C-56) (Chlamydophila felis).